Reading from the N-terminus, the 163-residue chain is Late embryogenesis abundant protein Dc3 (163 aa).

Disordered stretches follow at residues 1 to 117 (MASH…GGLM) and 139 to 163 (FGMAGADEEEKTTTTRVTRSSARTE). Composition is skewed to basic and acidic residues over residues 28–56 (TMKDKAQAAKDKASEMAGSARDRTVESKD), 67–84 (GAVKDKTCETAQAAKEKT), and 91–113 (TKEKASEMGESAKETAVAGKEKT). 6 tandem repeats follow at residues 32 to 42 (KAQAAKDKASE), 43 to 53 (MAGSARDRTVE), 65 to 75 (KAGAVKDKTCE), 76 to 86 (TAQAAKEKTGG), 87 to 97 (AMQATKEKASE), and 103 to 115 (KETAVAGKEKTGG). The tract at residues 32–115 (KAQAAKDKAS…AVAGKEKTGG (84 aa)) is 6 X 11 AA approximate repeats. Low complexity predominate over residues 152–163 (TTRVTRSSARTE).

The protein belongs to the LEA type 4 family.

The polypeptide is Late embryogenesis abundant protein Dc3 (Daucus carota (Wild carrot)).